The sequence spans 244 residues: Carboxy-S-adenosyl-L-methionine synthase (244 aa).

S-adenosyl-L-methionine-binding positions include Tyr41, Gly66–Ser68, Asp91–Asn92, Asn134, and Arg201.

The protein belongs to the class I-like SAM-binding methyltransferase superfamily. Cx-SAM synthase family. As to quaternary structure, homodimer.

It catalyses the reaction prephenate + S-adenosyl-L-methionine = carboxy-S-adenosyl-L-methionine + 3-phenylpyruvate + H2O. Its function is as follows. Catalyzes the conversion of S-adenosyl-L-methionine (SAM) to carboxy-S-adenosyl-L-methionine (Cx-SAM). The polypeptide is Carboxy-S-adenosyl-L-methionine synthase (Colwellia psychrerythraea (strain 34H / ATCC BAA-681) (Vibrio psychroerythus)).